The following is a 409-amino-acid chain: Na(+)-translocating NADH-quinone reductase subunit F (409 aa).

The chain crosses the membrane as a helical span at residues 5–25 (FIFGIGAFTAIVLVLAVVILI). In terms of domain architecture, 2Fe-2S ferredoxin-type spans 34 to 128 (GDITISINDD…SMDVELPEEV (95 aa)). The [2Fe-2S] cluster site is built by Cys-71, Cys-77, Cys-80, and Cys-112. An FAD-binding FR-type domain is found at 131-271 (VKKWECTVIS…SGPFGEFFAK (141 aa)).

This sequence belongs to the NqrF family. Composed of six subunits; NqrA, NqrB, NqrC, NqrD, NqrE and NqrF. The cofactor is [2Fe-2S] cluster. It depends on FAD as a cofactor.

It localises to the cell inner membrane. It carries out the reaction a ubiquinone + n Na(+)(in) + NADH + H(+) = a ubiquinol + n Na(+)(out) + NAD(+). Functionally, NQR complex catalyzes the reduction of ubiquinone-1 to ubiquinol by two successive reactions, coupled with the transport of Na(+) ions from the cytoplasm to the periplasm. The first step is catalyzed by NqrF, which accepts electrons from NADH and reduces ubiquinone-1 to ubisemiquinone by a one-electron transfer pathway. The polypeptide is Na(+)-translocating NADH-quinone reductase subunit F (Actinobacillus succinogenes (strain ATCC 55618 / DSM 22257 / CCUG 43843 / 130Z)).